A 210-amino-acid chain; its full sequence is SAP domain-containing ribonucleoprotein (210 aa).

Ala2 is modified (N-acetylalanine). Residues 8–42 form the SAP domain; that stretch reads LHKLKLAELKQECLARGLETKGIKQDLINRLQAYL. N6-acetyllysine is present on Lys10. A compositionally biased stretch (acidic residues) spans 45–64; that stretch reads HAEEEANEEDVLGDETEEEE. Residues 45 to 87 are disordered; sequence HAEEEANEEDVLGDETEEEEPKPIELPVKEEEPPEKVVDMASE. Residues 65-87 are compositionally biased toward basic and acidic residues; the sequence is PKPIELPVKEEEPPEKVVDMASE. An N6-acetyllysine modification is found at Lys142. Residues 161-210 are disordered; the sequence is VSSISRKSEDDEKLKKRKERFGIVTSSAGTGTTEDTEAKKRKRAERFGIA. Residue Ser163 is modified to Phosphoserine. The segment covering 184 to 193 has biased composition (polar residues); it reads VTSSAGTGTT.

The protein belongs to the SAP domain-containing ribonucleoprotein family. Interacts with DDX39A. Interacts with FUS. Interacts (via the C-terminal domain) with DDX39B; the interaction is direct and facilitates RNA binding of DDX39B. Component of the transcription/export (TREX) complex at least composed of ALYREF/THOC4, DDX39B, SARNP/CIP29, CHTOP and the THO subcomplex; TREX seems to have dynamic structure involving ATP-dependent remodeling; in the complex interacts directly with DDX39B in a ATP-dependent manner which bridges it to ALYREF/THOC4.

Its subcellular location is the nucleus. It localises to the nucleus speckle. In terms of biological role, binds both single-stranded and double-stranded DNA with higher affinity for the single-stranded form. Specifically binds to scaffold/matrix attachment region DNA. Also binds single-stranded RNA. Enhances RNA unwinding activity of DDX39A. May participate in important transcriptional or translational control of cell growth, metabolism and carcinogenesis. Component of the TREX complex which is thought to couple mRNA transcription, processing and nuclear export, and specifically associates with spliced mRNA and not with unspliced pre-mRNA. The TREX complex is recruited to spliced mRNAs by a transcription-independent mechanism, binds to mRNA upstream of the exon-junction complex (EJC) and is recruited in a splicing- and cap-dependent manner to a region near the 5' end of the mRNA where it functions in mRNA export to the cytoplasm via the TAP/NXF1 pathway. Associates with DDX39B, which facilitates RNA binding of DDX39B and likely plays a role in mRNA export. The chain is SAP domain-containing ribonucleoprotein (Sarnp) from Rattus norvegicus (Rat).